The sequence spans 150 residues: SsrA-binding protein (150 aa).

Residues 127 to 150 are disordered; it reads KRETEKQRDWQREKARIMKGDAKD.

The protein belongs to the SmpB family.

It localises to the cytoplasm. Its function is as follows. Required for rescue of stalled ribosomes mediated by trans-translation. Binds to transfer-messenger RNA (tmRNA), required for stable association of tmRNA with ribosomes. tmRNA and SmpB together mimic tRNA shape, replacing the anticodon stem-loop with SmpB. tmRNA is encoded by the ssrA gene; the 2 termini fold to resemble tRNA(Ala) and it encodes a 'tag peptide', a short internal open reading frame. During trans-translation Ala-aminoacylated tmRNA acts like a tRNA, entering the A-site of stalled ribosomes, displacing the stalled mRNA. The ribosome then switches to translate the ORF on the tmRNA; the nascent peptide is terminated with the 'tag peptide' encoded by the tmRNA and targeted for degradation. The ribosome is freed to recommence translation, which seems to be the essential function of trans-translation. This is SsrA-binding protein from Cupriavidus necator (strain ATCC 17699 / DSM 428 / KCTC 22496 / NCIMB 10442 / H16 / Stanier 337) (Ralstonia eutropha).